Reading from the N-terminus, the 531-residue chain is Polyamine aminopropyltransferase 1 (531 aa).

7 consecutive transmembrane segments (helical) span residues Phe-27–Leu-47, Val-59–Ala-79, Gly-96–Leu-116, Ala-122–Met-142, Met-160–Leu-180, Gly-188–Phe-208, and Ala-218–Ala-238. A spermidine synthase region spans residues Val-205–Pro-476. The PABS domain maps to Thr-233–Pro-471. Gln-263 is a binding site for S-methyl-5'-thioadenosine. Spermidine-binding residues include His-298 and Asp-320. S-methyl-5'-thioadenosine-binding positions include Glu-340 and Asp-374–Ala-375. The Proton acceptor role is filled by Asp-392.

Belongs to the spermidine/spermine synthase family. As to quaternary structure, homodimer or homotetramer.

It is found in the cell membrane. The enzyme catalyses S-adenosyl 3-(methylsulfanyl)propylamine + putrescine = S-methyl-5'-thioadenosine + spermidine + H(+). The protein operates within amine and polyamine biosynthesis; spermidine biosynthesis; spermidine from putrescine: step 1/1. Functionally, catalyzes the irreversible transfer of a propylamine group from the amino donor S-adenosylmethioninamine (decarboxy-AdoMet) to putrescine (1,4-diaminobutane) to yield spermidine. The chain is Polyamine aminopropyltransferase 1 from Streptomyces coelicolor (strain ATCC BAA-471 / A3(2) / M145).